The following is a 155-amino-acid chain: Putative pre-16S rRNA nuclease (155 aa).

Belongs to the YqgF nuclease family.

It localises to the cytoplasm. Functionally, could be a nuclease involved in processing of the 5'-end of pre-16S rRNA. The protein is Putative pre-16S rRNA nuclease of Xylella fastidiosa (strain M12).